The sequence spans 525 residues: Cytochrome P450 4V2 (525 aa).

Residues 13 to 33 traverse the membrane as a helical segment; the sequence is LLLWGAASALSLAGASLVLSL. Residues Glu329 and Cys467 each coordinate heme.

This sequence belongs to the cytochrome P450 family. Requires heme as cofactor. As to expression, broadly expressed. Detected in heart, brain, placenta, lung, liver, skeletal muscle, kidney, pancreas, retina, retinal pigment epithelium (RPE) and lymphocytes.

It is found in the endoplasmic reticulum membrane. It catalyses the reaction dodecanoate + reduced [NADPH--hemoprotein reductase] + O2 = 12-hydroxydodecanoate + oxidized [NADPH--hemoprotein reductase] + H2O + H(+). It carries out the reaction tetradecanoate + reduced [NADPH--hemoprotein reductase] + O2 = 14-hydroxytetradecanoate + oxidized [NADPH--hemoprotein reductase] + H2O + H(+). The enzyme catalyses hexadecanoate + reduced [NADPH--hemoprotein reductase] + O2 = 16-hydroxyhexadecanoate + oxidized [NADPH--hemoprotein reductase] + H2O + H(+). The catalysed reaction is (5Z,8Z,11Z,14Z,17Z)-eicosapentaenoate + reduced [NADPH--hemoprotein reductase] + O2 = 20-hydroxy-(5Z,8Z,11Z,14Z,17Z)-eicosapentaenoate + oxidized [NADPH--hemoprotein reductase] + H2O + H(+). It catalyses the reaction (4Z,7Z,10Z,13Z,16Z,19Z)-docosahexaenoate + reduced [NADPH--hemoprotein reductase] + O2 = 22-hydroxy-(4Z,7Z,10Z,13Z,16Z,19Z)-docosahexaenoate + oxidized [NADPH--hemoprotein reductase] + H2O + H(+). It participates in lipid metabolism; fatty acid metabolism. With respect to regulation, inhibited by N-hydroxy-N'-(4-n-butyl-2-methylphenyl formamidine)(HET0016) with an IC(50) of 38 nM. A cytochrome P450 monooxygenase involved in fatty acid metabolism in the eye. Catalyzes the omega-hydroxylation of polyunsaturated fatty acids (PUFAs) docosahexaenoate (DHA) and its precursor eicosapentaenoate (EPA), and may contribute to the homeostasis of these retinal PUFAs. Omega hydroxylates saturated fatty acids such as laurate, myristate and palmitate, the catalytic efficiency decreasing in the following order: myristate &gt; laurate &gt; palmitate (C14&gt;C12&gt;C16). Mechanistically, uses molecular oxygen inserting one oxygen atom into a substrate, and reducing the second into a water molecule, with two electrons provided by NADPH via cytochrome P450 reductase (CPR; NADPH-ferrihemoprotein reductase). This is Cytochrome P450 4V2 (CYP4V2) from Homo sapiens (Human).